The sequence spans 764 residues: Zygote defective protein 12 (764 aa).

The segment covering 1–20 (MLDLTNQESDSSENGNSKYA) has biased composition (polar residues). The disordered stretch occupies residues 1 to 33 (MLDLTNQESDSSENGNSKYADSTDGRGIGTSRR). Positions 1 to 236 (MLDLTNQESD…ESSVITNGNG (236 aa)) are interaction with dli-1. One can recognise a Calponin-homology (CH) domain in the interval 43 to 169 (RKDLADLVFW…VSLAFIGKTQ (127 aa)). Coiled coils occupy residues 244 to 405 (LSAN…HVKT) and 436 to 692 (GLES…NRLI). Residues 732 to 752 (ALPWRFGISSMLIIFMVWFFI) traverse the membrane as a helical segment.

Belongs to the hook family. Homodimer. Interacts with the dynein subunit dli-1 via its N-terminus. May interact with microtubules.

Its subcellular location is the nucleus membrane. The protein localises to the cytoplasm. It localises to the cytoskeleton. It is found in the microtubule organizing center. The protein resides in the centrosome. Its function is as follows. Cytoskeletal linker protein, which is essential for attachment of the centrosome to the nucleus. Required for dynein localization to the nuclear envelope. This is Zygote defective protein 12 (zyg-12) from Caenorhabditis briggsae.